A 95-amino-acid chain; its full sequence is Aspartyl/glutamyl-tRNA(Asn/Gln) amidotransferase subunit C (95 aa).

It belongs to the GatC family. Heterotrimer of A, B and C subunits.

The catalysed reaction is L-glutamyl-tRNA(Gln) + L-glutamine + ATP + H2O = L-glutaminyl-tRNA(Gln) + L-glutamate + ADP + phosphate + H(+). The enzyme catalyses L-aspartyl-tRNA(Asn) + L-glutamine + ATP + H2O = L-asparaginyl-tRNA(Asn) + L-glutamate + ADP + phosphate + 2 H(+). In terms of biological role, allows the formation of correctly charged Asn-tRNA(Asn) or Gln-tRNA(Gln) through the transamidation of misacylated Asp-tRNA(Asn) or Glu-tRNA(Gln) in organisms which lack either or both of asparaginyl-tRNA or glutaminyl-tRNA synthetases. The reaction takes place in the presence of glutamine and ATP through an activated phospho-Asp-tRNA(Asn) or phospho-Glu-tRNA(Gln). This Methylorubrum populi (strain ATCC BAA-705 / NCIMB 13946 / BJ001) (Methylobacterium populi) protein is Aspartyl/glutamyl-tRNA(Asn/Gln) amidotransferase subunit C.